Consider the following 505-residue polypeptide: NADH-quinone oxidoreductase subunit N 1 (505 aa).

14 helical membrane-spanning segments follow: residues 18-38 (LIPE…EMVL), 45-65 (LIAT…AWDF), 84-104 (YVGQ…SILA), 116-136 (IEFY…AQAN), 138-158 (FVLF…LVSY), 173-193 (LIMG…LYGV), 223-243 (FLAA…IGAF), 271-291 (AGFA…WWLV), 292-312 (QPVL…AALT), 319-339 (LIGL…IASH), 345-365 (VGAV…VFGV), 391-411 (FLAA…PLAG), 429-449 (GLLA…FGWI), and 473-493 (VGAA…LFGV).

It belongs to the complex I subunit 2 family. In terms of assembly, NDH-1 is composed of 14 different subunits. Subunits NuoA, H, J, K, L, M, N constitute the membrane sector of the complex.

It is found in the cell inner membrane. It catalyses the reaction a quinone + NADH + 5 H(+)(in) = a quinol + NAD(+) + 4 H(+)(out). In terms of biological role, NDH-1 shuttles electrons from NADH, via FMN and iron-sulfur (Fe-S) centers, to quinones in the respiratory chain. The immediate electron acceptor for the enzyme in this species is believed to be ubiquinone. Couples the redox reaction to proton translocation (for every two electrons transferred, four hydrogen ions are translocated across the cytoplasmic membrane), and thus conserves the redox energy in a proton gradient. The sequence is that of NADH-quinone oxidoreductase subunit N 1 from Opitutus terrae (strain DSM 11246 / JCM 15787 / PB90-1).